The chain runs to 265 residues: MYNPSQAVPVSLHKNQDNQDGGQQRSHYPQISSQQSQSYLSVPSIGTPSFGSVGSVSSLAPGSSFIPPSPMAPLTPATPASSESSGIVPQLQNIVSTVNLNCRLDLKKIALHARNAEYNPKRFAAVIMRIREPRTTALIFSSGKMVCTGAKREDNSRLAARKYARVVQKLGFAAKFLDFKIQNMVGSCDVKFPIRLEGLVLTHGQFSSYEPELFPGLIYRMVKPRIVLLIFVSGKVVLTGAKVRQEIYDAFNNIYPILKSFKKTS.

A disordered region spans residues 1–40; sequence MYNPSQAVPVSLHKNQDNQDGGQQRSHYPQISSQQSQSYL. Residues 18 to 29 are compositionally biased toward polar residues; it reads NQDGGQQRSHYP. 2 consecutive repeat copies span residues 91–167 and 181–258.

This sequence belongs to the TBP family. In terms of assembly, belongs to the TFIID complex together with the TBP-associated factors (TAFs). Binds DNA as monomer.

It localises to the nucleus. In terms of biological role, general transcription factor that functions at the core of the DNA-binding multiprotein factor TFIID. Binding of TFIID to the TATA box is the initial transcriptional step of the pre-initiation complex (PIC), playing a role in the activation of eukaryotic genes transcribed by RNA polymerase II. The chain is TATA-box-binding protein from Strongylocentrotus purpuratus (Purple sea urchin).